Consider the following 193-residue polypeptide: Xanthine phosphoribosyltransferase (193 aa).

Xanthine is bound by residues Leu-20 and Thr-27. Position 128–132 (128–132 (ANGQA)) interacts with 5-phospho-alpha-D-ribose 1-diphosphate. Lys-156 provides a ligand contact to xanthine.

This sequence belongs to the purine/pyrimidine phosphoribosyltransferase family. Xpt subfamily. As to quaternary structure, homodimer.

The protein resides in the cytoplasm. It carries out the reaction XMP + diphosphate = xanthine + 5-phospho-alpha-D-ribose 1-diphosphate. The protein operates within purine metabolism; XMP biosynthesis via salvage pathway; XMP from xanthine: step 1/1. Functionally, converts the preformed base xanthine, a product of nucleic acid breakdown, to xanthosine 5'-monophosphate (XMP), so it can be reused for RNA or DNA synthesis. The sequence is that of Xanthine phosphoribosyltransferase from Streptococcus pneumoniae (strain CGSP14).